A 308-amino-acid chain; its full sequence is Probable D,D-dipeptide transport ATP-binding protein DdpF (308 aa).

In terms of domain architecture, ABC transporter spans 8–243 (LRDVHINFPA…PAHPYTRLLL (236 aa)). 49–56 (GESGCGKS) lines the ATP pocket.

This sequence belongs to the ABC transporter superfamily. The complex is composed of two ATP-binding proteins (DdpD and DdpF), two transmembrane proteins (DdpB and DdpC) and a solute-binding protein (DdpA).

Its subcellular location is the cell inner membrane. Its function is as follows. Part of the ABC transporter complex DdpABCDF, which is probably involved in D,D-dipeptide transport. Probably responsible for energy coupling to the transport system. In Escherichia coli (strain K12), this protein is Probable D,D-dipeptide transport ATP-binding protein DdpF.